The sequence spans 446 residues: MSSSTSTIVAIASAAGTGGVGIVRLSGPQSRQIAVQLGVARLQPRHAHYARFRDAQGAVIDDGIALWFNAPHSFTGEDVVELQGHGSPVLLRQLVARCIELGARQARAGEFSERAFLNGKLDLAQAEAIADVIAAGDLRAARAARRALDGVFSRRVDAVAHTLTRLRIHVEAAIDFADEPLDTLGGNQVRDGLTQARTLLAQLLRDAERGRTLRDGLHAVLIGPPNAGKSSLLNALAGSERAIVTDVAGTTRDTLHEAIQLDGFELTLVDTAGLRDGGDAIEREGMRRARAELERADLALVVLDARDPQAARAAIGDAIDAVPRQLWIHNKCDLLSDAAPLDVNAIAVSAVTGQGLEQLHIRLRELALGDGVESVDGEFSARTRHVEALRRAERHVDAADLELGFEQLELAAEELRLAHEALGEITGKISADDLLGKIFSSFCIGK.

Residues R24, E81, and K120 each coordinate (6S)-5-formyl-5,6,7,8-tetrahydrofolate. The 153-residue stretch at 216–368 (GLHAVLIGPP…LHIRLRELAL (153 aa)) folds into the TrmE-type G domain. N226 is a K(+) binding site. Residues 226 to 231 (NAGKSS), 245 to 251 (TDVAGTT), and 270 to 273 (DTAG) contribute to the GTP site. S230 is a Mg(2+) binding site. Positions 245, 247, and 250 each coordinate K(+). T251 serves as a coordination point for Mg(2+). Position 446 (K446) interacts with (6S)-5-formyl-5,6,7,8-tetrahydrofolate.

It belongs to the TRAFAC class TrmE-Era-EngA-EngB-Septin-like GTPase superfamily. TrmE GTPase family. As to quaternary structure, homodimer. Heterotetramer of two MnmE and two MnmG subunits. The cofactor is K(+).

Its subcellular location is the cytoplasm. Its function is as follows. Exhibits a very high intrinsic GTPase hydrolysis rate. Involved in the addition of a carboxymethylaminomethyl (cmnm) group at the wobble position (U34) of certain tRNAs, forming tRNA-cmnm(5)s(2)U34. The protein is tRNA modification GTPase MnmE of Xanthomonas oryzae pv. oryzae (strain KACC10331 / KXO85).